The following is a 147-amino-acid chain: Hemoglobin subunit beta-A/B (147 aa).

A Globin domain is found at 2–147; that stretch reads EWTDAERSAI…VVNALKRQYH (146 aa). His-63 and His-92 together coordinate heme b.

It belongs to the globin family. Heterotetramer of two alpha chains and two beta chains. Red blood cells.

Involved in oxygen transport from gills to the various peripheral tissues. This chain is Hemoglobin subunit beta-A/B, found in Cyprinus carpio (Common carp).